A 208-amino-acid chain; its full sequence is Ribosomal RNA large subunit methyltransferase E (208 aa).

The S-adenosyl-L-methionine site is built by Gly-62, Trp-64, Asp-82, Asp-98, and Asp-123. Lys-163 (proton acceptor) is an active-site residue.

This sequence belongs to the class I-like SAM-binding methyltransferase superfamily. RNA methyltransferase RlmE family.

The protein localises to the cytoplasm. The enzyme catalyses uridine(2552) in 23S rRNA + S-adenosyl-L-methionine = 2'-O-methyluridine(2552) in 23S rRNA + S-adenosyl-L-homocysteine + H(+). In terms of biological role, specifically methylates the uridine in position 2552 of 23S rRNA at the 2'-O position of the ribose in the fully assembled 50S ribosomal subunit. The polypeptide is Ribosomal RNA large subunit methyltransferase E (Edwardsiella ictaluri (strain 93-146)).